The primary structure comprises 275 residues: F-box only protein 50 (275 aa).

A disordered region spans residues 1-67 (MEEVREGHAL…LPEPAQPSEA (67 aa)). Over residues 26 to 62 (PPSPRSPSPPPSPPPLPSPPSLPSPAAPEAPELPEPA) the composition is skewed to pro residues. Phosphoserine is present on residues serine 31, serine 37, and serine 49. The region spanning 95–273 (LLLRRPLYRN…VTDSSVSVQL (179 aa)) is the FBA domain.

In terms of tissue distribution, expressed in the esophagus, oral cavity, skin, tongue and reproductive organs.

The protein resides in the cytoplasm. Functionally, promotes cell proliferation. The chain is F-box only protein 50 (NCCRP1) from Homo sapiens (Human).